The following is a 298-amino-acid chain: ATP synthase gamma chain (298 aa).

It belongs to the ATPase gamma chain family. As to quaternary structure, F-type ATPases have 2 components, CF(1) - the catalytic core - and CF(0) - the membrane proton channel. CF(1) has five subunits: alpha(3), beta(3), gamma(1), delta(1), epsilon(1). CF(0) has three main subunits: a, b and c.

The protein localises to the cell inner membrane. Its function is as follows. Produces ATP from ADP in the presence of a proton gradient across the membrane. The gamma chain is believed to be important in regulating ATPase activity and the flow of protons through the CF(0) complex. The polypeptide is ATP synthase gamma chain (Albidiferax ferrireducens (strain ATCC BAA-621 / DSM 15236 / T118) (Rhodoferax ferrireducens)).